Here is a 500-residue protein sequence, read N- to C-terminus: Cobyric acid synthase (500 aa).

The GATase cobBQ-type domain occupies 253-446 (KIGVAAIYFP…FHGFFDRPEV (194 aa)). Residue C334 is the Nucleophile of the active site. H438 is a catalytic residue.

Belongs to the CobB/CobQ family. CobQ subfamily.

The protein operates within cofactor biosynthesis; adenosylcobalamin biosynthesis. In terms of biological role, catalyzes amidations at positions B, D, E, and G on adenosylcobyrinic A,C-diamide. NH(2) groups are provided by glutamine, and one molecule of ATP is hydrogenolyzed for each amidation. This chain is Cobyric acid synthase, found in Chlorobaculum tepidum (strain ATCC 49652 / DSM 12025 / NBRC 103806 / TLS) (Chlorobium tepidum).